The sequence spans 183 residues: Ras-related protein Rap-2a (183 aa).

A GTP-binding site is contributed by 10 to 17 (GSGGVGKS). Positions 32–40 (YDPTIEDFY) match the Effector region motif. Residues 57–61 (DTAGT) and 116–119 (NKVD) contribute to the GTP site. 2 S-palmitoyl cysteine lipidation sites follow: cysteine 176 and cysteine 177. Residue cysteine 180 is modified to Cysteine methyl ester. The S-farnesyl cysteine moiety is linked to residue cysteine 180. A propeptide spans 181–183 (NIQ) (removed in mature form).

It belongs to the small GTPase superfamily. Ras family. In terms of assembly, interacts with PLCE1. Interacts with ARHGAP29, SGSM1, SGSM2 and SGSM3. Interacts (GTP-bound form preferentially) with MAP4K4. Interacts with MINK1. Interacts with cytoskeletal actin. Interacts (GTP-bound form) with RUNDC3A. Interacts (GTP-bound form preferentially) with TNIK (via the CNH domain); the interaction is direct and recruits RAP2A to the E3 ubiquitin ligase NEDD4. Interacts with RGS14; the interaction is GTP-dependent. Ubiquitinated; undergoes 'Lys-63' monoubiquitination and diubiquitination by NEDD4. Multiple lysine residues are probably modified. Ubiquitination requires TNIK, prevents interaction with effectors and inactivates RAP2A. Ubiquitination by the ECS(RAB40B) complex leads to RAP2A localization to lamellipodia plasma membrane, activation, and regulation of sorting at early endosomes for recycling to the lamellipodia plasma membrane. Post-translationally, palmitoylated. Palmitoylation is required for association with recycling endosome membranes and activation of TNIK. As to expression, expressed in granular layer of the cerebellum, forebrain, striatum, layer V of the cortex, olfactory cortex, tubercules, subthalamic and hippocampus, particularly in the CA2 region, to a lesser extent in the CA1 region and the external layer of the dentate gyrus. Expressed in neurons.

Its subcellular location is the midbody. The protein localises to the cell projection. The protein resides in the lamellipodium membrane. It localises to the golgi apparatus. It is found in the recycling endosome membrane. Its subcellular location is the lysosome. It carries out the reaction GTP + H2O = GDP + phosphate + H(+). With respect to regulation, activated by the guanine nucleotide-exchange factors RAPGEF3 and RAPGEF4 in a cAMP-dependent manner. Nucleotide exchange is also specifically stimulated by RAPGEF5, RASGEF1A and RASGEF1B. In terms of biological role, small GTP-binding protein which cycles between a GDP-bound inactive and a GTP-bound active form. In its active form interacts with and regulates several effectors including MAP4K4, MINK1 and TNIK. Part of a signaling complex composed of NEDD4, RAP2A and TNIK which regulates neuronal dendrite extension and arborization during development. More generally, it is part of several signaling cascades and may regulate cytoskeletal rearrangements, cell migration, cell adhesion and cell spreading. This chain is Ras-related protein Rap-2a, found in Mus musculus (Mouse).